A 452-amino-acid chain; its full sequence is Pup--protein ligase (452 aa).

Residue Glu-9 participates in Mg(2+) binding. Arg-53 serves as a coordination point for ATP. Tyr-55 serves as a coordination point for Mg(2+). Catalysis depends on Asp-57, which acts as the Proton acceptor. Residue Glu-63 participates in Mg(2+) binding. Positions 66 and 419 each coordinate ATP.

Belongs to the Pup ligase/Pup deamidase family. Pup-conjugating enzyme subfamily.

The catalysed reaction is ATP + [prokaryotic ubiquitin-like protein]-L-glutamate + [protein]-L-lysine = ADP + phosphate + N(6)-([prokaryotic ubiquitin-like protein]-gamma-L-glutamyl)-[protein]-L-lysine.. The protein operates within protein degradation; proteasomal Pup-dependent pathway. It functions in the pathway protein modification; protein pupylation. Functionally, catalyzes the covalent attachment of the prokaryotic ubiquitin-like protein modifier Pup to the proteasomal substrate proteins, thereby targeting them for proteasomal degradation. This tagging system is termed pupylation. The ligation reaction involves the side-chain carboxylate of the C-terminal glutamate of Pup and the side-chain amino group of a substrate lysine. In Mycobacterium avium (strain 104), this protein is Pup--protein ligase.